The following is a 101-amino-acid chain: Urease subunit beta (101 aa).

The protein belongs to the urease beta subunit family. In terms of assembly, heterotrimer of UreA (gamma), UreB (beta) and UreC (alpha) subunits. Three heterotrimers associate to form the active enzyme.

It localises to the cytoplasm. The enzyme catalyses urea + 2 H2O + H(+) = hydrogencarbonate + 2 NH4(+). It functions in the pathway nitrogen metabolism; urea degradation; CO(2) and NH(3) from urea (urease route): step 1/1. The polypeptide is Urease subunit beta (Rhizobium rhizogenes (strain K84 / ATCC BAA-868) (Agrobacterium radiobacter)).